A 556-amino-acid polypeptide reads, in one-letter code: Formate--tetrahydrofolate ligase (556 aa).

65 to 72 (TPAGEGKT) is an ATP binding site.

The protein belongs to the formate--tetrahydrofolate ligase family.

It catalyses the reaction (6S)-5,6,7,8-tetrahydrofolate + formate + ATP = (6R)-10-formyltetrahydrofolate + ADP + phosphate. The protein operates within one-carbon metabolism; tetrahydrofolate interconversion. This is Formate--tetrahydrofolate ligase from Maricaulis maris (strain MCS10) (Caulobacter maris).